An 87-amino-acid chain; its full sequence is Prolactin-releasing peptide (87 aa).

A signal peptide spans 1 to 22; it reads MKVLRAWLLCLLMLGLALRGAA. Phenylalanine 53 bears the Phenylalanine amide mark. Residues 58 to 87 constitute a propeptide that is removed on maturation; the sequence is ATLGDVPKPGLRPRLTCFPLEGGAMSSQDG.

Medulla oblongata and hypothalamus.

The protein resides in the secreted. Its function is as follows. Stimulates prolactin (PRL) release and regulates the expression of prolactin through its receptor GPR10. May stimulate lactotrophs directly to secrete PRL. This is Prolactin-releasing peptide (PRLH) from Homo sapiens (Human).